Reading from the N-terminus, the 800-residue chain is DNA topoisomerase 4 subunit A (800 aa).

Positions 31–495 (LPDVRDGLKP…EIEEIKIDKE (465 aa)) constitute a Topo IIA-type catalytic domain. Y119 acts as the O-(5'-phospho-DNA)-tyrosine intermediate in catalysis.

The protein belongs to the type II topoisomerase GyrA/ParC subunit family. ParC type 2 subfamily. Heterotetramer composed of ParC and ParE.

The protein resides in the cell membrane. The enzyme catalyses ATP-dependent breakage, passage and rejoining of double-stranded DNA.. Its function is as follows. Topoisomerase IV is essential for chromosome segregation. It relaxes supercoiled DNA. Performs the decatenation events required during the replication of a circular DNA molecule. This chain is DNA topoisomerase 4 subunit A, found in Staphylococcus aureus (strain N315).